Here is a 205-residue protein sequence, read N- to C-terminus: Snake venom metalloproteinase BmooMPalpha-I (205 aa).

The Peptidase M12B domain maps to 8-204 (RYIELVVVAD…HNPQCILNEP (197 aa)). Residues E11 and D95 each contribute to the Ca(2+) site. Cystine bridges form between C119/C199, C159/C183, and C161/C166. H144 contacts Zn(2+). E145 is a catalytic residue. Residues H148 and H154 each contribute to the Zn(2+) site. 2 residues coordinate Ca(2+): C199 and N202.

It belongs to the venom metalloproteinase (M12B) family. P-I subfamily. Monomer. Requires Zn(2+) as cofactor. As to expression, expressed by the venom gland.

The protein localises to the secreted. Its activity is regulated as follows. Inhibited by EDTA. Not inhibited by the serine proteinase inhibitors aprotinin and benzamidine. Its function is as follows. Snake venom zinc metalloproteinase that cleaves the alpha chain of fibrinogen (FGA) first followed by the beta chain (FGB) and shows no effect on the gamma chain. Cleaves only the beta chain of fibrin, leaving the gamma-dimer untouched. Shows proteolytic activity towards azocasein. Causes defibrinogenation when intraperitoneally administered on mice. This is Snake venom metalloproteinase BmooMPalpha-I from Bothrops moojeni (Lance-headed viper).